Here is a 391-residue protein sequence, read N- to C-terminus: Probable protein phosphatase 2C 32 (391 aa).

A disordered region spans residues 1–53; that stretch reads MSCTVAIPSSPVFSPSRRPLSCKAASASASPESVSVAASSPAQAAPPAGSPLR. Low complexity predominate over residues 8 to 51; sequence PSSPVFSPSRRPLSCKAASASASPESVSVAASSPAQAAPPAGSP. A helical membrane pass occupies residues 95 to 115; the sequence is LVVPVCGGAAAAAAAAAVAAV. In terms of domain architecture, PPM-type phosphatase spans 129–386; that stretch reads EFAVYCRRGK…DDISIVIIQL (258 aa). The Mn(2+) site is built by aspartate 168, glycine 169, aspartate 332, and aspartate 377.

Belongs to the PP2C family. The cofactor is Mg(2+). Mn(2+) is required as a cofactor.

The protein resides in the membrane. It catalyses the reaction O-phospho-L-seryl-[protein] + H2O = L-seryl-[protein] + phosphate. The enzyme catalyses O-phospho-L-threonyl-[protein] + H2O = L-threonyl-[protein] + phosphate. This Oryza sativa subsp. japonica (Rice) protein is Probable protein phosphatase 2C 32.